Here is a 73-residue protein sequence, read N- to C-terminus: UPF0352 protein HSM_0097 (73 aa).

The protein belongs to the UPF0352 family.

This Histophilus somni (strain 2336) (Haemophilus somnus) protein is UPF0352 protein HSM_0097.